Reading from the N-terminus, the 310-residue chain is UDP-N-acetylenolpyruvoylglucosamine reductase (310 aa).

The FAD-binding PCMH-type domain occupies 27–192 (KIGGKARYIV…LKATFRLQYA (166 aa)). Residue R171 is part of the active site. The active-site Proton donor is S223. E293 is a catalytic residue.

It belongs to the MurB family. Requires FAD as cofactor.

The protein resides in the cytoplasm. It carries out the reaction UDP-N-acetyl-alpha-D-muramate + NADP(+) = UDP-N-acetyl-3-O-(1-carboxyvinyl)-alpha-D-glucosamine + NADPH + H(+). It participates in cell wall biogenesis; peptidoglycan biosynthesis. In terms of biological role, cell wall formation. The protein is UDP-N-acetylenolpyruvoylglucosamine reductase of Caldicellulosiruptor saccharolyticus (strain ATCC 43494 / DSM 8903 / Tp8T 6331).